Here is a 154-residue protein sequence, read N- to C-terminus: Ubiquitin-conjugating enzyme E2 L3 (154 aa).

Residues 2–149 (AASRRLMKEL…AEEFTKKYGE (148 aa)) form the UBC core domain. Residue C86 is the Glycyl thioester intermediate of the active site. K131 is subject to N6-acetyllysine.

This sequence belongs to the ubiquitin-conjugating enzyme family. As to quaternary structure, interacts with PRKN; involved in ubiquitination and degradation of misfolded proteins. Interacts with UBE3A. Interacts with CCNB1IP1, CBL, ZAP70, RNF19A, RNF19B and RNF144B. Interacts with ARIH1. Interacts with ARIH2 (via RING-type 1). Interacts with NCOA1; they functionally interact to regulate progesterone receptor transcriptional activity. Interacts with NDFIP1 (via N-terminus); the interaction mediates recruitment of UBE2L3 to ITCH and causes MAP3K7 ubiquitination. Ubiquitinated. The alteration of UBE2L3 protein levels during the S-phase of the cell cycle is due to ubiquitin-dependent proteasomal degradation. Autoubiquitinated in vitro.

It is found in the nucleus. The protein localises to the cytoplasm. The enzyme catalyses S-ubiquitinyl-[E1 ubiquitin-activating enzyme]-L-cysteine + [E2 ubiquitin-conjugating enzyme]-L-cysteine = [E1 ubiquitin-activating enzyme]-L-cysteine + S-ubiquitinyl-[E2 ubiquitin-conjugating enzyme]-L-cysteine.. The protein operates within protein modification; protein ubiquitination. In terms of biological role, ubiquitin-conjugating enzyme E2 that specifically acts with HECT-type and RBR family E3 ubiquitin-protein ligases. Does not function with most RING-containing E3 ubiquitin-protein ligases because it lacks intrinsic E3-independent reactivity with lysine: in contrast, it has activity with the RBR family E3 enzymes, such as PRKN, RNF31 and ARIH1, that function like RING-HECT hybrids. Accepts ubiquitin from the E1 complex and catalyzes its covalent attachment to other proteins. Mediates ubiquitination by the CUL9-RBX1 complex. In vitro catalyzes 'Lys-11'-linked polyubiquitination. Involved in the selective degradation of short-lived and abnormal proteins. Down-regulated during the S-phase it is involved in progression through the cell cycle. Regulates nuclear hormone receptors transcriptional activity. May play a role in myelopoiesis. This chain is Ubiquitin-conjugating enzyme E2 L3 (UBE2L3), found in Bos taurus (Bovine).